The following is a 562-amino-acid chain: Sulfite reductase [NADPH] hemoprotein beta-component (562 aa).

Residues Cys-428, Cys-434, Cys-473, and Cys-477 each contribute to the [4Fe-4S] cluster site. Cys-477 contributes to the siroheme binding site.

The protein belongs to the nitrite and sulfite reductase 4Fe-4S domain family. In terms of assembly, alpha(8)-beta(8). The alpha component is a flavoprotein, the beta component is a hemoprotein. Siroheme is required as a cofactor. It depends on [4Fe-4S] cluster as a cofactor.

It carries out the reaction hydrogen sulfide + 3 NADP(+) + 3 H2O = sulfite + 3 NADPH + 4 H(+). It participates in sulfur metabolism; hydrogen sulfide biosynthesis; hydrogen sulfide from sulfite (NADPH route): step 1/1. Its function is as follows. Component of the sulfite reductase complex that catalyzes the 6-electron reduction of sulfite to sulfide. This is one of several activities required for the biosynthesis of L-cysteine from sulfate. In Myxococcus xanthus (strain DK1622), this protein is Sulfite reductase [NADPH] hemoprotein beta-component.